A 315-amino-acid chain; its full sequence is tRNA uridine(34) hydroxylase (315 aa).

The 91-residue stretch at 145–235 (MKNDFILVDM…GIIEYVNFIK (91 aa)) folds into the Rhodanese domain. Residue Cys-199 is the Cysteine persulfide intermediate of the active site.

It belongs to the TrhO family.

It catalyses the reaction uridine(34) in tRNA + AH2 + O2 = 5-hydroxyuridine(34) in tRNA + A + H2O. Its function is as follows. Catalyzes oxygen-dependent 5-hydroxyuridine (ho5U) modification at position 34 in tRNAs. This chain is tRNA uridine(34) hydroxylase, found in Wigglesworthia glossinidia brevipalpis.